A 334-amino-acid polypeptide reads, in one-letter code: Thioredoxin reductase (334 aa).

Residues 11–14, 40–41, Gln-45, Asn-54, Cys-148, Asp-294, and 301–303 each bind FAD; these read SGAG, TA, and RQA. Cys-145 and Cys-148 are oxidised to a cystine.

Belongs to the class-II pyridine nucleotide-disulfide oxidoreductase family. In terms of assembly, homodimer. It depends on FAD as a cofactor.

The catalysed reaction is [thioredoxin]-dithiol + NADP(+) = [thioredoxin]-disulfide + NADPH + H(+). Its function is as follows. Component of the thioredoxin-thioredoxin reductase system which may be involved in biosynthesis of penicillins and cephalosporins and may be important in determining the thiol-disulfide redox balance. The sequence is that of Thioredoxin reductase (TRR1) from Penicillium chrysogenum (Penicillium notatum).